Here is a 150-residue protein sequence, read N- to C-terminus: Large ribosomal subunit protein bL9 (150 aa).

The protein belongs to the bacterial ribosomal protein bL9 family.

In terms of biological role, binds to the 23S rRNA. The polypeptide is Large ribosomal subunit protein bL9 (Streptococcus pyogenes serotype M3 (strain SSI-1)).